The chain runs to 359 residues: Zinc finger CCCH domain-containing protein 20 (359 aa).

3 consecutive C3H1-type zinc fingers follow at residues 75–107 (TCDH…HPGE), 119–145 (YSGT…HGVF), and 153–177 (RYRT…HSPD). 2 disordered regions span residues 207 to 226 (SISP…SDSS) and 334 to 359 (MGRI…DLVM).

In Arabidopsis thaliana (Mouse-ear cress), this protein is Zinc finger CCCH domain-containing protein 20.